The chain runs to 211 residues: ATP phosphoribosyltransferase (211 aa).

The protein belongs to the ATP phosphoribosyltransferase family. Short subfamily. In terms of assembly, heteromultimer composed of HisG and HisZ subunits.

It localises to the cytoplasm. The enzyme catalyses 1-(5-phospho-beta-D-ribosyl)-ATP + diphosphate = 5-phospho-alpha-D-ribose 1-diphosphate + ATP. It functions in the pathway amino-acid biosynthesis; L-histidine biosynthesis; L-histidine from 5-phospho-alpha-D-ribose 1-diphosphate: step 1/9. Its function is as follows. Catalyzes the condensation of ATP and 5-phosphoribose 1-diphosphate to form N'-(5'-phosphoribosyl)-ATP (PR-ATP). Has a crucial role in the pathway because the rate of histidine biosynthesis seems to be controlled primarily by regulation of HisG enzymatic activity. This Pseudomonas putida (strain ATCC 47054 / DSM 6125 / CFBP 8728 / NCIMB 11950 / KT2440) protein is ATP phosphoribosyltransferase.